A 449-amino-acid polypeptide reads, in one-letter code: Tol-Pal system protein TolB (449 aa).

The first 36 residues, 1 to 36, serve as a signal peptide directing secretion; sequence MDCPNMPLHINRRQMLLSAATAAGALALGPARDAFG.

It belongs to the TolB family. In terms of assembly, the Tol-Pal system is composed of five core proteins: the inner membrane proteins TolA, TolQ and TolR, the periplasmic protein TolB and the outer membrane protein Pal. They form a network linking the inner and outer membranes and the peptidoglycan layer.

It localises to the periplasm. Functionally, part of the Tol-Pal system, which plays a role in outer membrane invagination during cell division and is important for maintaining outer membrane integrity. This chain is Tol-Pal system protein TolB, found in Rhodopseudomonas palustris (strain HaA2).